We begin with the raw amino-acid sequence, 699 residues long: Elongation factor G (699 aa).

The tr-type G domain occupies 8–283; the sequence is EHIRNIGICA…AVVDFLPSPI (276 aa). Residues 17–24, 81–85, and 135–138 each bind GTP; these read AHIDAGKT, DTPGH, and NKMD.

Belongs to the TRAFAC class translation factor GTPase superfamily. Classic translation factor GTPase family. EF-G/EF-2 subfamily.

It localises to the cytoplasm. Functionally, catalyzes the GTP-dependent ribosomal translocation step during translation elongation. During this step, the ribosome changes from the pre-translocational (PRE) to the post-translocational (POST) state as the newly formed A-site-bound peptidyl-tRNA and P-site-bound deacylated tRNA move to the P and E sites, respectively. Catalyzes the coordinated movement of the two tRNA molecules, the mRNA and conformational changes in the ribosome. In Rickettsia peacockii (strain Rustic), this protein is Elongation factor G.